The primary structure comprises 1964 residues: MQPQLLLLLLLPLNFPVILTRELLCGGSPEPCANGGTCLRLSRGQGICQCAPGFLGETCQFPDPCRDTQLCKNGGSCQALLPTPPSSRSPTSPLTPHFSCTCPSGFTGDRCQTHLEELCPPSFCSNGGHCYVQASGRPQCSCEPGWTGEQCQLRDFCSANPCANGGVCLATYPQIQCRCPPGFEGHTCERDINECFLEPGPCPQGTSCHNTLGSYQCLCPVGQEGPQCKLRKGACPPGSCLNGGTCQLVPEGHSTFHLCLCPPGFTGLDCEMNPDDCVRHQCQNGATCLDGLDTYTCLCPKTWKGWDCSEDIDECEARGPPRCRNGGTCQNTAGSFHCVCVSGWGGAGCEENLDDCAAATCAPGSTCIDRVGSFSCLCPPGRTGLLCHLEDMCLSQPCHVNAQCSTNPLTGSTLCICQPGYSGSTCHQDLDECQMAQQGPSPCEHGGSCINTPGSFNCLCLPGYTGSRCEADHNECLSQPCHPGSTCLDLLATFHCLCPPGLEGRLCEVEVNECTSNPCLNQAACHDLLNGFQCLCLPGFTGARCEKDMDECSSTPCANGGRCRDQPGAFYCECLPGFEGPHCEKEVDECLSDPCPVGASCLDLPGAFFCLCRPGFTGQLCEVPLCTPNMCQPGQQCQGQEHRAPCLCPDGSPGCVPAEDNCPCHHGHCQRSLCVCDEGWTGPECETELGGCISTPCAHGGTCHPQPSGYNCTCPAGYMGLTCSEEVTACHSGPCLNGGSCSIRPEGYSCTCLPSHTGRHCQTAVDHCVSASCLNGGTCVNKPGTFFCLCATGFQGLHCEEKTNPSCADSPCRNKATCQDTPRGARCLCSPGYTGSSCQTLIDLCARKPCPHTARCLQSGPSFQCLCLQGWTGALCDFPLSCQKAAMSQGIEISGLCQNGGLCIDTGSSYFCRCPPGFQGKLCQDNVNPCEPNPCHHGSTCVPQPSGYVCQCAPGYEGQNCSKVLDACQSQPCHNHGTCTSRPGGFHCACPPGFVGLRCEGDVDECLDRPCHPSGTAACHSLANAFYCQCLPGHTGQRCEVEMDLCQSQPCSNGGSCEITTGPPPGFTCHCPKGFEGPTCSHKALSCGIHHCHNGGLCLPSPKPGSPPLCACLSGFGGPDCLTPPAPPGCGPPSPCLHNGTCTETPGLGNPGFQCTCPPDSPGPRCQRPGASGCEGRGGDGTCDAGCSGPGGDWDGGDCSLGVPDPWKGCPPHSQCWLLFRDGRCHPQCDSEECLFDGYDCEIPLTCIPAYDQYCRDHFHNGHCEKGCNNAECGWDGGDCRPEGEDSEGRPSLALLVVLRPPALDQQLLALARVLSLTLRVGLWVRKDSEGRNMVFPYPGTRAKEELSGARDSSSWERQAPPTQPLGKETESLGAGFVVVMGVDLSRCGPEHPASRCPWDSGLLLRFLAAMAAVGALEPLLPGPLLAAHPQAGTRPSANQLPWPILCSPVVGVLLLALGALLVLQLIRRRRREHGALWLPPGFIRRPQTQQAPHRRRPPLGEDNIGLKALKPEAEVDEDGVAMCSGPEEGEAEETASASRCQLWPLNSGCGELPQAAMLTPPQECESEVLDVDTCGPDGVTPLMSAVFCGGVQSTTGASPQRLGLGNLEPWEPLLDRGACPQAHTVGTGETPLHLAARFSRPTAARRLLEAGANPNQPDRAGRTPLHTAVAADAREVCQLLLASRQTTVDARTEDGTTPLMLAARLAVEDLVEELIAARADVGARDKRGKTALHWAAAVNNARAARSLLQAGADKDAQDSREQTPLFLAAREGAVEVAQLLLELGAARGLRDQAGLAPGDVARQRSHWDLLTLLEGAGPTTQEARAHARTTPGGGAAPRCRTLSAGARPRGGGACLQARTWSVDLGARGGKVYARCRSRSGSCGGPTTRGRRFSAGSRGRRGARASQDDWPRDWVALEACGSACSAPIPPPSLTPSPERGSPQVAWGLPVHQEIPLNSVVRNLN.

Residues 1 to 20 (MQPQLLLLLLLPLNFPVILT) form the signal peptide. 4 EGF-like domains span residues 21-60 (RELL…ETCQ), 61-112 (FPDP…DRCQ), 115-152 (LEEL…EQCQ), and 153-189 (LRDF…HTCE). Topologically, residues 21–1443 (RELLCGGSPE…TRPSANQLPW (1423 aa)) are extracellular. Disulfide bonds link cysteine 25–cysteine 38, cysteine 32–cysteine 48, cysteine 50–cysteine 59, cysteine 65–cysteine 77, cysteine 71–cysteine 100, cysteine 102–cysteine 111, cysteine 119–cysteine 130, cysteine 124–cysteine 140, cysteine 142–cysteine 151, cysteine 157–cysteine 168, cysteine 162–cysteine 177, cysteine 179–cysteine 188, cysteine 195–cysteine 208, cysteine 202–cysteine 217, cysteine 219–cysteine 228, cysteine 235–cysteine 246, cysteine 240–cysteine 259, cysteine 261–cysteine 270, cysteine 277–cysteine 288, cysteine 282–cysteine 297, cysteine 299–cysteine 308, cysteine 315–cysteine 329, cysteine 323–cysteine 338, cysteine 340–cysteine 349, cysteine 356–cysteine 367, cysteine 361–cysteine 376, cysteine 378–cysteine 387, cysteine 393–cysteine 404, cysteine 398–cysteine 415, cysteine 417–cysteine 426, cysteine 433–cysteine 449, cysteine 443–cysteine 458, cysteine 460–cysteine 469, cysteine 476–cysteine 487, cysteine 481–cysteine 496, cysteine 498–cysteine 507, cysteine 514–cysteine 525, cysteine 519–cysteine 534, cysteine 536–cysteine 545, cysteine 552–cysteine 563, cysteine 557–cysteine 572, cysteine 574–cysteine 583, cysteine 590–cysteine 601, cysteine 595–cysteine 610, cysteine 612–cysteine 621, cysteine 626–cysteine 637, cysteine 631–cysteine 646, cysteine 648–cysteine 655, cysteine 662–cysteine 669, cysteine 664–cysteine 674, cysteine 676–cysteine 685, cysteine 692–cysteine 703, cysteine 697–cysteine 712, cysteine 714–cysteine 723, cysteine 730–cysteine 741, cysteine 735–cysteine 750, cysteine 752–cysteine 761, cysteine 768–cysteine 779, cysteine 773–cysteine 788, cysteine 790–cysteine 799, cysteine 807–cysteine 818, cysteine 812–cysteine 827, cysteine 829–cysteine 838, cysteine 845–cysteine 856, cysteine 850–cysteine 865, cysteine 867–cysteine 876, cysteine 882–cysteine 903, cysteine 897–cysteine 912, cysteine 914–cysteine 923, cysteine 930–cysteine 941, cysteine 935–cysteine 950, cysteine 952–cysteine 961, cysteine 968–cysteine 979, cysteine 973–cysteine 988, cysteine 990–cysteine 999, cysteine 1006–cysteine 1019, cysteine 1011–cysteine 1028, cysteine 1030–cysteine 1039, cysteine 1046–cysteine 1057, cysteine 1051–cysteine 1069, cysteine 1071–cysteine 1080, cysteine 1087–cysteine 1098, cysteine 1092–cysteine 1110, cysteine 1112–cysteine 1121, cysteine 1130–cysteine 1142, cysteine 1136–cysteine 1155, cysteine 1157–cysteine 1166, cysteine 1174–cysteine 1187, cysteine 1183–cysteine 1199, cysteine 1210–cysteine 1234, cysteine 1216–cysteine 1229, cysteine 1225–cysteine 1241, cysteine 1247–cysteine 1273, cysteine 1255–cysteine 1268, and cysteine 1264–cysteine 1280. Residues 191 to 229 (DINECFLEPGPCPQGTSCHNTLGSYQCLCPVGQEGPQCK) enclose the EGF-like 5; calcium-binding domain. The 41-residue stretch at 231–271 (RKGACPPGSCLNGGTCQLVPEGHSTFHLCLCPPGFTGLDCE) folds into the EGF-like 6 domain. Residues 273–309 (NPDDCVRHQCQNGATCLDGLDTYTCLCPKTWKGWDCS) form the EGF-like 7; calcium-binding domain. Residues 311–350 (DIDECEARGPPRCRNGGTCQNTAGSFHCVCVSGWGGAGCE) form the EGF-like 8; calcium-binding domain. One can recognise an EGF-like 9; calcium-binding domain in the interval 352 to 388 (NLDDCAAATCAPGSTCIDRVGSFSCLCPPGRTGLLCH). One can recognise an EGF-like 10 domain in the interval 389–427 (LEDMCLSQPCHVNAQCSTNPLTGSTLCICQPGYSGSTCH). Residues 429–470 (DLDECQMAQQGPSPCEHGGSCINTPGSFNCLCLPGYTGSRCE) form the EGF-like 11; calcium-binding domain. In terms of domain architecture, EGF-like 12; calcium-binding spans 472-508 (DHNECLSQPCHPGSTCLDLLATFHCLCPPGLEGRLCE). An EGF-like 13; calcium-binding domain is found at 510–546 (EVNECTSNPCLNQAACHDLLNGFQCLCLPGFTGARCE). An EGF-like 14; calcium-binding domain is found at 548 to 584 (DMDECSSTPCANGGRCRDQPGAFYCECLPGFEGPHCE). One can recognise an EGF-like 15; calcium-binding domain in the interval 586-622 (EVDECLSDPCPVGASCLDLPGAFFCLCRPGFTGQLCE). EGF-like domains lie at 623–656 (VPLC…PGCV), 658–686 (AEDN…PECE), 688–724 (ELGG…LTCS), 726–762 (EVTA…RHCQ), 764–800 (AVDH…LHCE), 803–839 (TNPS…SSCQ), 841–877 (LIDL…ALCD), 878–924 (FPLS…KLCQ), 926–962 (NVNP…QNCS), 964–1000 (VLDA…LRCE), 1002–1040 (DVDE…QRCE), 1042–1081 (EMDL…PTCS), 1083–1122 (KALS…PDCL), and 1126–1167 (APPG…PRCQ). The N-linked (GlcNAc...) asparagine glycan is linked to asparagine 711. Asparagine 960 carries an N-linked (GlcNAc...) asparagine glycan. Asparagine 1139 carries an N-linked (GlcNAc...) asparagine glycan. LNR repeat units follow at residues 1166–1209 (CQRP…PWKG), 1210–1241 (CPPH…GYDC), and 1247–1287 (CIPA…GEDS). The segment at 1345 to 1369 (EELSGARDSSSWERQAPPTQPLGKE) is disordered. A helical membrane pass occupies residues 1444–1464 (PILCSPVVGVLLLALGALLVL). Topologically, residues 1465 to 1964 (QLIRRRRREH…PLNSVVRNLN (500 aa)) are cytoplasmic. Residues 1516–1535 (VDEDGVAMCSGPEEGEAEET) are disordered. ANK repeat units lie at residues 1628-1657 (TGET…NPNQ), 1661-1691 (AGRT…TVDA), 1695-1724 (DGTT…DVGA), 1728-1757 (RGKT…DKDA), and 1761-1790 (REQT…ARGL). A disordered region spans residues 1879–1907 (RSGSCGGPTTRGRRFSAGSRGRRGARASQ).

Belongs to the NOTCH family. In terms of assembly, heterodimer of a C-terminal fragment N(TM) and a N-terminal fragment N(EC) which are probably linked by disulfide bonds. Interacts with MAML1, MAML2 and MAML3 which act as transcriptional coactivators for NOTCH4. In terms of processing, synthesized in the endoplasmic reticulum as an inactive form which is proteolytically cleaved by a furin-like convertase in the trans-Golgi network before it reaches the plasma membrane to yield an active, ligand-accessible form. Cleavage results in a C-terminal fragment N(TM) and a N-terminal fragment N(EC). Following ligand binding, it is cleaved by TNF-alpha converting enzyme (TACE) to yield a membrane-associated intermediate fragment called notch extracellular truncation (NEXT). This fragment is then cleaved by presenilin dependent gamma-secretase to release a notch-derived peptide containing the intracellular domain (NICD) from the membrane. Phosphorylated. Highly expressed in lung, moderately in heart kidney, and at lower levels in the ovary and skeletal muscle. A very low expression is seen in the brain, intestine, liver and testis.

The protein resides in the cell membrane. The protein localises to the nucleus. Functions as a receptor for membrane-bound ligands Jagged1, Jagged2 and Delta1 to regulate cell-fate determination. Upon ligand activation through the released notch intracellular domain (NICD) it forms a transcriptional activator complex with RBPJ/RBPSUH and activates genes of the enhancer of split locus. Affects the implementation of differentiation, proliferation and apoptotic programs. May regulate branching morphogenesis in the developing vascular system. The polypeptide is Neurogenic locus notch homolog protein 4 (Mus musculus (Mouse)).